The primary structure comprises 350 residues: Alcohol dehydrogenase 1 (350 aa).

Positions 46, 69, 100, 103, 106, 114, and 156 each coordinate Zn(2+). Residues 180 to 186 (GAGGGLG), Asp204, Lys209, 271 to 273 (VGL), and Arg343 each bind NAD(+).

The protein belongs to the zinc-containing alcohol dehydrogenase family. As to quaternary structure, homotetramer. Zn(2+) is required as a cofactor.

It is found in the cytoplasm. It carries out the reaction a primary alcohol + NAD(+) = an aldehyde + NADH + H(+). The enzyme catalyses a secondary alcohol + NAD(+) = a ketone + NADH + H(+). In Candida albicans (Yeast), this protein is Alcohol dehydrogenase 1 (ADH1).